Here is a 308-residue protein sequence, read N- to C-terminus: Porphobilinogen deaminase (308 aa).

Cys-241 carries the post-translational modification S-(dipyrrolylmethanemethyl)cysteine.

This sequence belongs to the HMBS family. In terms of assembly, monomer. The cofactor is dipyrromethane.

The catalysed reaction is 4 porphobilinogen + H2O = hydroxymethylbilane + 4 NH4(+). The protein operates within porphyrin-containing compound metabolism; protoporphyrin-IX biosynthesis; coproporphyrinogen-III from 5-aminolevulinate: step 2/4. Functionally, tetrapolymerization of the monopyrrole PBG into the hydroxymethylbilane pre-uroporphyrinogen in several discrete steps. The chain is Porphobilinogen deaminase from Staphylococcus epidermidis (strain ATCC 35984 / DSM 28319 / BCRC 17069 / CCUG 31568 / BM 3577 / RP62A).